Reading from the N-terminus, the 122-residue chain is Basic phospholipase A2 F16 (122 aa).

7 disulfide bridges follow: Cys-26–Cys-115, Cys-28–Cys-44, Cys-43–Cys-95, Cys-49–Cys-122, Cys-50–Cys-88, Cys-57–Cys-81, and Cys-75–Cys-86. Ca(2+) is bound by residues Tyr-27, Gly-29, and Gly-31. His-47 is an active-site residue. Asp-48 is a Ca(2+) binding site. Asp-89 is a catalytic residue.

Belongs to the phospholipase A2 family. Group II subfamily. D49 sub-subfamily. Ca(2+) serves as cofactor. In terms of tissue distribution, expressed by the venom gland.

Its subcellular location is the secreted. It catalyses the reaction a 1,2-diacyl-sn-glycero-3-phosphocholine + H2O = a 1-acyl-sn-glycero-3-phosphocholine + a fatty acid + H(+). With respect to regulation, pre-incubation with heparin markedly reduces the neurotoxicity of this toxin. Its function is as follows. Snake venom phospholipase A2 (PLA2) that produces neuromuscular blockade in chick biventer cervicis preparations in the absence and presence of crotapotin. In contrast, in mouse phrenic nerve-diaphragm preparations, the neuromuscular blockade is dependent on crotapotin. PLA2 catalyzes the calcium-dependent hydrolysis of the 2-acyl groups in 3-sn-phosphoglycerides. This Crotalus durissus terrificus (South American rattlesnake) protein is Basic phospholipase A2 F16.